We begin with the raw amino-acid sequence, 182 residues long: Gremlin-1 (182 aa).

A signal peptide spans 1 to 24 (MNCLVYALGSLFLLSGLLLPSSEG). Residues 23-65 (EGKKKVSGSQGAIPPPDKGQPNDSEQGQAQPGDRVRGKGKGQA) are disordered. N-linked (GlcNAc...) asparagine glycosylation occurs at Asn44. Disulfide bonds link Cys92/Cys142, Cys106/Cys156, Cys116/Cys174, and Cys120/Cys176. In terms of domain architecture, CTCK spans 92 to 182 (CKTQPLKQTI…QCRCISIDLD (91 aa)).

Belongs to the DAN family.

It localises to the secreted. In terms of biological role, cytokine that has an axial patterning activity. Acts like BMP antagonist in embryonic explants. Blocks the BMP2 activity. This Xenopus laevis (African clawed frog) protein is Gremlin-1 (grem1).